The primary structure comprises 168 residues: Large ribosomal subunit protein uL11 (168 aa).

It belongs to the universal ribosomal protein uL11 family. Part of the ribosomal stalk of the 50S ribosomal subunit. Interacts with L10 and the large rRNA to form the base of the stalk. L10 forms an elongated spine to which L12 dimers bind in a sequential fashion forming a multimeric L10(L12)X complex.

Its function is as follows. Forms part of the ribosomal stalk which helps the ribosome interact with GTP-bound translation factors. This chain is Large ribosomal subunit protein uL11, found in Metallosphaera sedula (strain ATCC 51363 / DSM 5348 / JCM 9185 / NBRC 15509 / TH2).